Here is a 355-residue protein sequence, read N- to C-terminus: Protein ATP1B4 (355 aa).

Residues 1-108 (MRRQLRSRRA…SLARTGQSWS (108 aa)) are Nuclear-facing. The disordered stretch occupies residues 33 to 77 (ADEEEEAEEEARVMVVPDLEEEEEEEEEKEEEEKEEEDSHSQETD). A compositionally biased stretch (acidic residues) spans 50-68 (DLEEEEEEEEEKEEEEKEE). The chain crosses the membrane as a helical; Signal-anchor for type II membrane protein span at residues 109 to 129 (LILVIYFFFYASLAAVITLCM). Topologically, residues 130–355 (YTLFLTISPY…RVIFTLNIET (226 aa)) are perinuclear space.

This sequence belongs to the X(+)/potassium ATPases subunit beta family. As to quaternary structure, associates with a SMAD7-transcriptional complex. Interacts with SNW1 and TOR1AIP1. Does not associate with known Na,K-ATPase alpha-subunits.

It is found in the nucleus inner membrane. Its function is as follows. May act as a transcriptional coregulator during muscle development through its interaction with SNW1. Has lost its ancestral function as a Na,K-ATPase beta-subunit. This chain is Protein ATP1B4 (ATP1B4), found in Bos taurus (Bovine).